A 165-amino-acid polypeptide reads, in one-letter code: Interferon gamma (165 aa).

An N-terminal signal peptide occupies residues 1 to 23 (MKYTSYILAFQLCIVLGSLGCYC). At Gln24 the chain carries Pyrrolidone carboxylic acid. Asn48 and Asn120 each carry an N-linked (GlcNAc...) asparagine glycan.

Belongs to the type II (or gamma) interferon family. As to quaternary structure, homodimer. Interacts with IFNGR1 (via extracellular domain); this interaction promotes IFNGR1 dimerization. As to expression, released primarily from activated T lymphocytes.

Its subcellular location is the secreted. Type II interferon produced by immune cells such as T-cells and NK cells that plays crucial roles in antimicrobial, antiviral, and antitumor responses by activating effector immune cells and enhancing antigen presentation. Primarily signals through the JAK-STAT pathway after interaction with its receptor IFNGR1 to affect gene regulation. Upon IFNG binding, IFNGR1 intracellular domain opens out to allow association of downstream signaling components JAK2, JAK1 and STAT1, leading to STAT1 activation, nuclear translocation and transcription of IFNG-regulated genes. Many of the induced genes are transcription factors such as IRF1 that are able to further drive regulation of a next wave of transcription. Plays a role in class I antigen presentation pathway by inducing a replacement of catalytic proteasome subunits with immunoproteasome subunits. In turn, increases the quantity, quality, and repertoire of peptides for class I MHC loading. Increases the efficiency of peptide generation also by inducing the expression of activator PA28 that associates with the proteasome and alters its proteolytic cleavage preference. Up-regulates as well MHC II complexes on the cell surface by promoting expression of several key molecules such as cathepsins B/CTSB, H/CTSH, and L/CTSL. Participates in the regulation of hematopoietic stem cells during development and under homeostatic conditions by affecting their development, quiescence, and differentiation. This chain is Interferon gamma (IFNG), found in Macaca fascicularis (Crab-eating macaque).